Here is a 637-residue protein sequence, read N- to C-terminus: Chaperone protein HtpG (637 aa).

The segment at 1–345 (MSQQETHGFQ…SNDLPLNVSR (345 aa)) is a; substrate-binding. A b region spans residues 346–562 (EILQDNHITK…EGEMSTQMIK (217 aa)). A c region spans residues 563 to 637 (LMQAAGQPVP…MNQMLLANMK (75 aa)).

This sequence belongs to the heat shock protein 90 family. As to quaternary structure, homodimer.

It is found in the cytoplasm. Functionally, molecular chaperone. Has ATPase activity. The protein is Chaperone protein HtpG of Shewanella putrefaciens (strain CN-32 / ATCC BAA-453).